The chain runs to 72 residues: Translation initiation factor IF-1 1 (72 aa).

Residues Met1–Lys72 form the S1-like domain.

The protein belongs to the IF-1 family. As to quaternary structure, component of the 30S ribosomal translation pre-initiation complex which assembles on the 30S ribosome in the order IF-2 and IF-3, IF-1 and N-formylmethionyl-tRNA(fMet); mRNA recruitment can occur at any time during PIC assembly.

It localises to the cytoplasm. Its function is as follows. One of the essential components for the initiation of protein synthesis. Stabilizes the binding of IF-2 and IF-3 on the 30S subunit to which N-formylmethionyl-tRNA(fMet) subsequently binds. Helps modulate mRNA selection, yielding the 30S pre-initiation complex (PIC). Upon addition of the 50S ribosomal subunit IF-1, IF-2 and IF-3 are released leaving the mature 70S translation initiation complex. This chain is Translation initiation factor IF-1 1, found in Bordetella avium (strain 197N).